Here is a 137-residue protein sequence, read N- to C-terminus: MSIMLTVSEVARKLGLNPQTLYFYERIGVVDHPQRNQSGYRVYQEKDLAILSFIRHAKDLGFSLEEIADILHLQSQQSLTCDEIYHKLTSKILQLESGIKEMEKMKDDLSKILSLCCQRISNGGKHGNCCLLNEQLT.

Positions 4–73 (MLTVSEVARK…LEEIADILHL (70 aa)) constitute an HTH merR-type domain. Positions 8–27 (SEVARKLGLNPQTLYFYERI) form a DNA-binding region, H-T-H motif.

This is an uncharacterized protein from Synechocystis sp. (strain ATCC 27184 / PCC 6803 / Kazusa).